Reading from the N-terminus, the 382-residue chain is ATP phosphoribosyltransferase regulatory subunit (382 aa).

Belongs to the class-II aminoacyl-tRNA synthetase family. HisZ subfamily. In terms of assembly, heteromultimer composed of HisG and HisZ subunits.

It localises to the cytoplasm. It participates in amino-acid biosynthesis; L-histidine biosynthesis; L-histidine from 5-phospho-alpha-D-ribose 1-diphosphate: step 1/9. In terms of biological role, required for the first step of histidine biosynthesis. May allow the feedback regulation of ATP phosphoribosyltransferase activity by histidine. The sequence is that of ATP phosphoribosyltransferase regulatory subunit from Burkholderia thailandensis (strain ATCC 700388 / DSM 13276 / CCUG 48851 / CIP 106301 / E264).